A 505-amino-acid polypeptide reads, in one-letter code: Deoxyguanosinetriphosphate triphosphohydrolase (505 aa).

The HD domain occupies 66 to 273 (RLTHSMEVQQ…MEAADDISYC (208 aa)).

This sequence belongs to the dGTPase family. Type 1 subfamily. Homotetramer. The cofactor is Mg(2+).

It catalyses the reaction dGTP + H2O = 2'-deoxyguanosine + triphosphate + H(+). Functionally, dGTPase preferentially hydrolyzes dGTP over the other canonical NTPs. The sequence is that of Deoxyguanosinetriphosphate triphosphohydrolase from Salmonella arizonae (strain ATCC BAA-731 / CDC346-86 / RSK2980).